Reading from the N-terminus, the 203-residue chain is Peptide deformylase (203 aa).

Fe cation-binding residues include C130 and H173. E174 is a catalytic residue. H177 is a Fe cation binding site.

Belongs to the polypeptide deformylase family. Fe(2+) is required as a cofactor.

The enzyme catalyses N-terminal N-formyl-L-methionyl-[peptide] + H2O = N-terminal L-methionyl-[peptide] + formate. Its function is as follows. Removes the formyl group from the N-terminal Met of newly synthesized proteins. Requires at least a dipeptide for an efficient rate of reaction. N-terminal L-methionine is a prerequisite for activity but the enzyme has broad specificity at other positions. The protein is Peptide deformylase of Streptococcus pneumoniae serotype 4 (strain ATCC BAA-334 / TIGR4).